A 56-amino-acid polypeptide reads, in one-letter code: Small ribosomal subunit protein uS14 (56 aa).

Residues cysteine 21, cysteine 24, cysteine 39, and cysteine 42 each contribute to the Zn(2+) site.

It belongs to the universal ribosomal protein uS14 family. Component of the 40S small ribosomal subunit. Zn(2+) is required as a cofactor.

The protein resides in the cytoplasm. The protein localises to the cytosol. Its subcellular location is the rough endoplasmic reticulum. The chain is Small ribosomal subunit protein uS14 (RpS29) from Lonomia obliqua (Moth).